The primary structure comprises 410 residues: Ribose 1,5-bisphosphate phosphokinase PhnN (410 aa).

The interval 1–220 (MRYAVYLAPP…VWLLMAGSTS (220 aa)) is unknown. Residues 221–410 (MRTETGQLIY…SHCHQPITAL (190 aa)) form a ribose 1,5-bisphosphokinase region. 233-240 (GPSGAGKD) contributes to the ATP binding site.

This sequence in the C-terminal section; belongs to the ribose 1,5-bisphosphokinase family.

The catalysed reaction is alpha-D-ribose 1,5-bisphosphate + ATP = 5-phospho-alpha-D-ribose 1-diphosphate + ADP. It participates in metabolic intermediate biosynthesis; 5-phospho-alpha-D-ribose 1-diphosphate biosynthesis; 5-phospho-alpha-D-ribose 1-diphosphate from D-ribose 5-phosphate (route II): step 3/3. In terms of biological role, catalyzes the phosphorylation of ribose 1,5-bisphosphate to 5-phospho-D-ribosyl alpha-1-diphosphate (PRPP). The polypeptide is Ribose 1,5-bisphosphate phosphokinase PhnN (phnN) (Laribacter hongkongensis (strain HLHK9)).